The primary structure comprises 612 residues: Zinc metalloproteinase-disintegrin-like 2a (612 aa).

The signal sequence occupies residues 1–20; the sequence is MIQVLLVTICLAVFPYQGSS. The propeptide occupies 21-189; the sequence is IILGSGNVND…KKASQLNLTP (169 aa). Positions 199-395 constitute a Peptidase M12B domain; that stretch reads KYIELVIVAD…NRPPCILNKP (197 aa). Glu202 is a binding site for Ca(2+). Asn218 carries an N-linked (GlcNAc...) asparagine glycan. A Ca(2+)-binding site is contributed by Asp286. 3 cysteine pairs are disulfide-bonded: Cys310-Cys390, Cys350-Cys374, and Cys352-Cys357. Residue His335 participates in Zn(2+) binding. The active site involves Glu336. Positions 339 and 345 each coordinate Zn(2+). Ca(2+)-binding residues include Cys390, Asn393, Val405, Asn408, Phe410, Glu412, Glu415, and Asp418. Positions 403–489 constitute a Disintegrin domain; sequence PPVCGNYFVE…DCPTDNFQRN (87 aa). 14 disulfide bridges follow: Cys406–Cys435, Cys417–Cys430, Cys419–Cys425, Cys429–Cys452, Cys443–Cys449, Cys448–Cys474, Cys461–Cys481, Cys468–Cys500, Cys493–Cys505, Cys512–Cys562, Cys527–Cys573, Cys540–Cys550, Cys557–Cys599, and Cys593–Cys605. The short motif at 467-469 is the D/ECD-tripeptide element; sequence ECD.

The protein belongs to the venom metalloproteinase (M12B) family. P-III subfamily. Zn(2+) serves as cofactor. In terms of tissue distribution, expressed by the venom gland.

It localises to the secreted. Functionally, snake venom metalloproteinase that impairs hemostasis in the envenomed animal. The sequence is that of Zinc metalloproteinase-disintegrin-like 2a from Crotalus adamanteus (Eastern diamondback rattlesnake).